A 205-amino-acid chain; its full sequence is Small ribosomal subunit protein uS4 (205 aa).

The region spanning 94-172 is the S4 RNA-binding domain; that stretch reads SRLDSIVYRM…TTPDYVSFDV (79 aa).

Belongs to the universal ribosomal protein uS4 family. Part of the 30S ribosomal subunit. Contacts protein S5. The interaction surface between S4 and S5 is involved in control of translational fidelity.

Its function is as follows. One of the primary rRNA binding proteins, it binds directly to 16S rRNA where it nucleates assembly of the body of the 30S subunit. With S5 and S12 plays an important role in translational accuracy. This chain is Small ribosomal subunit protein uS4, found in Rickettsia bellii (strain OSU 85-389).